Here is a 528-residue protein sequence, read N- to C-terminus: Putative pumilio homolog 10 (528 aa).

The 341-residue stretch at 188-528 (EGSGASYPDE…KIFSKTILKK (341 aa)) folds into the PUM-HD domain. Pumilio repeat units follow at residues 213 to 248 (EIYGSVNLMARDQIGCRALQKLVEEGTVLDSKVIFL), 249 to 284 (EIIDHVVELSMDPLGNYIVQKLLVVSDEEQRTMIVS), 285 to 323 (VLTSKPRELIKICLNTNGTRVIQKMIKTVKTKQQIALVK), 325 to 360 (ALEPGFLVLVNDSNGYHVLQSCLEFLVPNDNKFVVE), 361 to 396 (AATEYCAQLATHQYGCYVLQCSLINTVGLQHERLVA), 397 to 433 (EISRDSLRLSQDPFGNYVVQCLIDQQVSSVNLLLPFR), 434 to 465 (THCIELATQKFSSHVIEKCLRKYPESRAEIVR), and 466 to 503 (ELLSYPNFEQLLQDPYANYVIQTALSVTKGAVRARLVE).

It localises to the cytoplasm. In terms of biological role, sequence-specific RNA-binding protein that regulates translation and mRNA stability by binding the 3'-UTR of target mRNAs. This Arabidopsis thaliana (Mouse-ear cress) protein is Putative pumilio homolog 10 (APUM10).